Reading from the N-terminus, the 270-residue chain is MGNTSSERAALERQAGHKTPRRDSSGGTKDGDRPKILMDSPEDADIFHTEEMKAPEKEEFLAWQHDLEVNEKAPAQARPTVFRWTGGGKEVYLSGSFNNWSKLPLTRSQNNFVAILDLPEGEHQYKFFVDGQWTHDPSEPIVTSQLGTVNNIIQVKKTDFEVFDALMVDSQKCSDVSELSSSPPGPYHQEPYISKPEERFKAPPILPPHLLQVILNKDTGISCDPALLPEPNHVMLNHLYALSIKDGVMVLSATHRYKKKYVTTLLYKPI.

The interval 1–43 (MGNTSSERAALERQAGHKTPRRDSSGGTKDGDRPKILMDSPED) is disordered. A lipid anchor (N-myristoyl glycine) is attached at Gly2. Thr4 is subject to Phosphothreonine. Ser5 and Ser6 each carry phosphoserine. The span at 9–36 (AALERQAGHKTPRRDSSGGTKDGDRPKI) shows a compositional bias: basic and acidic residues. The residue at position 19 (Thr19) is a Phosphothreonine. Residues Ser24 and Ser25 each carry the phosphoserine; by autocatalysis modification. Phosphoserine occurs at positions 40, 96, and 101. Residues 68–163 (EVNEKAPAQA…QVKKTDFEVF (96 aa)) are glycogen-binding domain. Ser108 is subject to Phosphoserine; by autocatalysis. Thr148 carries the phosphothreonine modification. Ser182 is subject to Phosphoserine. N6-succinyllysine is present on Lys201.

The protein belongs to the 5'-AMP-activated protein kinase beta subunit family. As to quaternary structure, AMPK is a heterotrimer of an alpha catalytic subunit (PRKAA1 or PRKAA2), a beta (PRKAB1 or PRKAB2) and a gamma non-catalytic subunits (PRKAG1, PRKAG2 or PRKAG3). Interacts with FNIP1 and FNIP2. In terms of processing, phosphorylated when associated with the catalytic subunit (PRKAA1 or PRKAA2). Phosphorylated by ULK1; leading to negatively regulate AMPK activity and suggesting the existence of a regulatory feedback loop between ULK1 and AMPK. As to expression, highly expressed in kidney, heart, white adipose tissue, lung and spleen.

Non-catalytic subunit of AMP-activated protein kinase (AMPK), an energy sensor protein kinase that plays a key role in regulating cellular energy metabolism. In response to reduction of intracellular ATP levels, AMPK activates energy-producing pathways and inhibits energy-consuming processes: inhibits protein, carbohydrate and lipid biosynthesis, as well as cell growth and proliferation. AMPK acts via direct phosphorylation of metabolic enzymes, and by longer-term effects via phosphorylation of transcription regulators. Also acts as a regulator of cellular polarity by remodeling the actin cytoskeleton; probably by indirectly activating myosin. Beta non-catalytic subunit acts as a scaffold on which the AMPK complex assembles, via its C-terminus that bridges alpha (PRKAA1 or PRKAA2) and gamma subunits (PRKAG1, PRKAG2 or PRKAG3). The sequence is that of 5'-AMP-activated protein kinase subunit beta-1 (Prkab1) from Rattus norvegicus (Rat).